The sequence spans 122 residues: Large ribosomal subunit protein uL14 (122 aa).

This sequence belongs to the universal ribosomal protein uL14 family. In terms of assembly, part of the 50S ribosomal subunit. Forms a cluster with proteins L3 and L19. In the 70S ribosome, L14 and L19 interact and together make contacts with the 16S rRNA in bridges B5 and B8.

Binds to 23S rRNA. Forms part of two intersubunit bridges in the 70S ribosome. This Bartonella quintana (strain Toulouse) (Rochalimaea quintana) protein is Large ribosomal subunit protein uL14.